Reading from the N-terminus, the 465-residue chain is Chromosomal replication initiator protein DnaA (465 aa).

The tract at residues 1-84 (MSLSLWQQCL…RFEVGSKPLV (84 aa)) is domain I, interacts with DnaA modulators. The interval 84-128 (VQAISQPAQPHHKQVSAAPQQQVRSAPVRPSWDNSPAQAEHTYRS) is domain II. The tract at residues 91-120 (AQPHHKQVSAAPQQQVRSAPVRPSWDNSPA) is disordered. Residues 129–345 (NVNPKHTFDN…GALNRVIANA (217 aa)) form a domain III, AAA+ region region. Positions 173, 175, 176, and 177 each coordinate ATP. Residues 346–465 (NFTGRSITID…FSNLIRTLSS (120 aa)) form a domain IV, binds dsDNA region.

It belongs to the DnaA family. In terms of assembly, oligomerizes as a right-handed, spiral filament on DNA at oriC.

It localises to the cytoplasm. Its function is as follows. Plays an essential role in the initiation and regulation of chromosomal replication. ATP-DnaA binds to the origin of replication (oriC) to initiate formation of the DNA replication initiation complex once per cell cycle. Binds the DnaA box (a 9 base pair repeat at the origin) and separates the double-stranded (ds)DNA. Forms a right-handed helical filament on oriC DNA; dsDNA binds to the exterior of the filament while single-stranded (ss)DNA is stabiized in the filament's interior. The ATP-DnaA-oriC complex binds and stabilizes one strand of the AT-rich DNA unwinding element (DUE), permitting loading of DNA polymerase. After initiation quickly degrades to an ADP-DnaA complex that is not apt for DNA replication. Binds acidic phospholipids. In Pectobacterium carotovorum subsp. carotovorum (strain PC1), this protein is Chromosomal replication initiator protein DnaA.